We begin with the raw amino-acid sequence, 120 residues long: Large ribosomal subunit protein bL12 (120 aa).

Belongs to the bacterial ribosomal protein bL12 family. Homodimer. Part of the ribosomal stalk of the 50S ribosomal subunit. Forms a multimeric L10(L12)X complex, where L10 forms an elongated spine to which 2 to 4 L12 dimers bind in a sequential fashion. Binds GTP-bound translation factors.

Its function is as follows. Forms part of the ribosomal stalk which helps the ribosome interact with GTP-bound translation factors. Is thus essential for accurate translation. This chain is Large ribosomal subunit protein bL12, found in Listeria innocua serovar 6a (strain ATCC BAA-680 / CLIP 11262).